Consider the following 178-residue polypeptide: Cytochrome b6-f complex iron-sulfur subunit (178 aa).

The helical transmembrane segment at 20 to 42 (LLTFGTATGVALGALYPVANYFM) threads the bilayer. In terms of domain architecture, Rieske spans 71 to 161 (NHPAGDRSLV…IDVEDDKVFV (91 aa)). Cys-107, His-109, Cys-125, and His-128 together coordinate [2Fe-2S] cluster. A disulfide bridge links Cys-112 with Cys-127.

It belongs to the Rieske iron-sulfur protein family. In terms of assembly, the 4 large subunits of the cytochrome b6-f complex are cytochrome b6, subunit IV (17 kDa polypeptide, PetD), cytochrome f and the Rieske protein, while the 4 small subunits are PetG, PetL, PetM and PetN. The complex functions as a dimer. [2Fe-2S] cluster serves as cofactor.

It is found in the cellular thylakoid membrane. The catalysed reaction is 2 oxidized [plastocyanin] + a plastoquinol + 2 H(+)(in) = 2 reduced [plastocyanin] + a plastoquinone + 4 H(+)(out). Functionally, component of the cytochrome b6-f complex, which mediates electron transfer between photosystem II (PSII) and photosystem I (PSI), cyclic electron flow around PSI, and state transitions. This chain is Cytochrome b6-f complex iron-sulfur subunit, found in Prochlorococcus marinus (strain MIT 9211).